The sequence spans 327 residues: Phenylalanine--tRNA ligase alpha subunit (327 aa).

Residue E252 coordinates Mg(2+).

It belongs to the class-II aminoacyl-tRNA synthetase family. Phe-tRNA synthetase alpha subunit type 1 subfamily. As to quaternary structure, tetramer of two alpha and two beta subunits. Mg(2+) is required as a cofactor.

The protein resides in the cytoplasm. It carries out the reaction tRNA(Phe) + L-phenylalanine + ATP = L-phenylalanyl-tRNA(Phe) + AMP + diphosphate + H(+). The sequence is that of Phenylalanine--tRNA ligase alpha subunit from Escherichia coli O139:H28 (strain E24377A / ETEC).